An 811-amino-acid chain; its full sequence is Lysine-specific histone demethylase 1 homolog 3 (811 aa).

Residues 1 to 10 (MSDQPPPYTP) show a composition bias toward pro residues. The interval 1-79 (MSDQPPPYTP…PSAQPPPRAS (79 aa)) is disordered. A compositionally biased stretch (basic residues) spans 44-55 (NKRKRTGFRRKL). Over residues 56–71 (PSGSPAAPVAVAASPS) the composition is skewed to low complexity. The region spanning 88-189 (NREPTAEAVT…FGVAPAIKER (102 aa)) is the SWIRM domain. 4 residues coordinate FAD: E227, R229, R235, and E609. The tract at residues 790–811 (RNSSRTKTRPSKLKIGIPKSKS) is disordered.

This sequence belongs to the flavin monoamine oxidase family. FAD serves as cofactor.

Probable histone demethylase. The chain is Lysine-specific histone demethylase 1 homolog 3 from Oryza sativa subsp. indica (Rice).